Consider the following 114-residue polypeptide: MLNIYLKSKIHMAKITRKEVYYEGSIEVDEELMEKAGISEGEVVLVVNVNNAARFVTYVIKGKRGSREINLYGAAARLGEEGDRVIIMAFTFSDKPVKAKTIVLNEKNEIIQEK.

Residue S25 is the Schiff-base intermediate with substrate; via pyruvic acid of the active site. Residue S25 is modified to Pyruvic acid (Ser). Residue T57 participates in substrate binding. The active-site Proton donor is the Y58. A substrate-binding site is contributed by G73–A75.

Belongs to the PanD family. In terms of assembly, heterooctamer of four alpha and four beta subunits. It depends on pyruvate as a cofactor. Is synthesized initially as an inactive proenzyme, which is activated by self-cleavage at a specific serine bond to produce a beta-subunit with a hydroxyl group at its C-terminus and an alpha-subunit with a pyruvoyl group at its N-terminus.

The protein localises to the cytoplasm. It catalyses the reaction L-aspartate + H(+) = beta-alanine + CO2. It participates in cofactor biosynthesis; (R)-pantothenate biosynthesis; beta-alanine from L-aspartate: step 1/1. In terms of biological role, catalyzes the pyruvoyl-dependent decarboxylation of aspartate to produce beta-alanine. The sequence is that of Aspartate 1-decarboxylase from Thermotoga petrophila (strain ATCC BAA-488 / DSM 13995 / JCM 10881 / RKU-1).